We begin with the raw amino-acid sequence, 425 residues long: MDHRSKELFERAQQLIPGGVNSPVRACLGVDSDPLFVAHAKGSHLTTVDGTSFVDYVQSWGPMLLGHAHPVVASAIHAAVDRGTSYGAPCEDEVVLAEAVIDALPGVEMVRMVNSGTEATMSALRLARGVTGRNKVVKFVGCYHGHADAFLASAGSGVATLSIPGTPGVPEATVRDTLLAPYNDLTAVAELFTLHGKDIAAIIVEPVAGNMGLVLPMNGFLQGLRDLCTEHGALLIFDEVITGFRVNYGGAQKRFDITPDLTTLGKIIGGGLPVGAYGGRADLMRRIAPCGEVYQAGTLSGNPLAMAAGIATLAELKKSDYDALEARVAALATELQAILAAKGVPVRVNTIASMFTVFFTDQPVTDFASAKTANAALYTSYYKQMRDKGIYLAPSPFEAAMVSFAHTDADLAALLDAARAITLSA.

Residue K266 is modified to N6-(pyridoxal phosphate)lysine.

It belongs to the class-III pyridoxal-phosphate-dependent aminotransferase family. HemL subfamily. Homodimer. It depends on pyridoxal 5'-phosphate as a cofactor.

It is found in the cytoplasm. It carries out the reaction (S)-4-amino-5-oxopentanoate = 5-aminolevulinate. It participates in porphyrin-containing compound metabolism; protoporphyrin-IX biosynthesis; 5-aminolevulinate from L-glutamyl-tRNA(Glu): step 2/2. This chain is Glutamate-1-semialdehyde 2,1-aminomutase, found in Nitratidesulfovibrio vulgaris (strain DSM 19637 / Miyazaki F) (Desulfovibrio vulgaris).